The chain runs to 150 residues: UPF0178 protein PP_5221 (150 aa).

Belongs to the UPF0178 family.

This is UPF0178 protein PP_5221 from Pseudomonas putida (strain ATCC 47054 / DSM 6125 / CFBP 8728 / NCIMB 11950 / KT2440).